Consider the following 414-residue polypeptide: Serine hydroxymethyltransferase (414 aa).

Residues Leu-116 and 120 to 122 contribute to the (6S)-5,6,7,8-tetrahydrofolate site; that span reads GHL. At Lys-224 the chain carries N6-(pyridoxal phosphate)lysine. (6S)-5,6,7,8-tetrahydrofolate contacts are provided by residues Glu-240 and 348–350; that span reads SPF.

Belongs to the SHMT family. In terms of assembly, homodimer. Requires pyridoxal 5'-phosphate as cofactor.

It is found in the cytoplasm. It carries out the reaction (6R)-5,10-methylene-5,6,7,8-tetrahydrofolate + glycine + H2O = (6S)-5,6,7,8-tetrahydrofolate + L-serine. Its pathway is one-carbon metabolism; tetrahydrofolate interconversion. It participates in amino-acid biosynthesis; glycine biosynthesis; glycine from L-serine: step 1/1. In terms of biological role, catalyzes the reversible interconversion of serine and glycine with tetrahydrofolate (THF) serving as the one-carbon carrier. This reaction serves as the major source of one-carbon groups required for the biosynthesis of purines, thymidylate, methionine, and other important biomolecules. Also exhibits THF-independent aldolase activity toward beta-hydroxyamino acids, producing glycine and aldehydes, via a retro-aldol mechanism. The sequence is that of Serine hydroxymethyltransferase from Campylobacter jejuni subsp. jejuni serotype O:23/36 (strain 81-176).